A 101-amino-acid polypeptide reads, in one-letter code: uncharacterized protein (101 aa).

Positions 1-12 (MAAFQHRAKRSK) are enriched in basic residues. Disordered stretches follow at residues 1–30 (MAAF…KKRA) and 65–87 (AQDQ…NVDK). A compositionally biased stretch (low complexity) spans 65–78 (AQDQRSDAQAQQQR).

This is an uncharacterized protein from Eremothecium gossypii (strain ATCC 10895 / CBS 109.51 / FGSC 9923 / NRRL Y-1056) (Yeast).